The following is a 527-amino-acid chain: Glutamate--cysteine ligase (527 aa).

It belongs to the glutamate--cysteine ligase type 1 family. Type 1 subfamily.

The enzyme catalyses L-cysteine + L-glutamate + ATP = gamma-L-glutamyl-L-cysteine + ADP + phosphate + H(+). Its pathway is sulfur metabolism; glutathione biosynthesis; glutathione from L-cysteine and L-glutamate: step 1/2. The sequence is that of Glutamate--cysteine ligase from Bordetella bronchiseptica (strain ATCC BAA-588 / NCTC 13252 / RB50) (Alcaligenes bronchisepticus).